A 467-amino-acid polypeptide reads, in one-letter code: Palmitoyltransferase ZDHHC18-A (467 aa).

Topologically, residues 1-59 (MKNCEYQQIDPRALRTPSSRTSSTLPCGRKGSQRLRRKWEVFPGKNRFYCDGRIMLARQ) are cytoplasmic. The chain crosses the membrane as a helical span at residues 60–80 (CGVLPLTIGLIFITSVLFFTF). At 81–88 (DCPFLVDH) the chain is on the lumenal side. Residues 89 to 109 (LTVFIPVIGGVLFIFVVISLL) traverse the membrane as a helical segment. Residues 110-204 (QTSFTDPGIL…GNCVGKRNYR (95 aa)) are Cytoplasmic-facing. Positions 161-211 (KYCFTCKMFRPPRTSHCSLCDNCVERFDHHCPWVGNCVGKRNYRFFYAFIV) constitute a DHHC domain. Cysteine 191 functions as the S-palmitoyl cysteine intermediate in the catalytic mechanism. A helical membrane pass occupies residues 205-225 (FFYAFIVSLSFLTSFIFGCVI). Topologically, residues 226–247 (THLTLRSQGGNGFIQAIQDSPA) are lumenal. A helical transmembrane segment spans residues 248–268 (SVVELVICFFSIWSILGLSGF). The Cytoplasmic portion of the chain corresponds to 269–467 (HTYLVASNLT…APDMGFIPLN (199 aa)).

Belongs to the DHHC palmitoyltransferase family. ERF2/ZDHHC9 subfamily.

The protein resides in the golgi apparatus membrane. The catalysed reaction is L-cysteinyl-[protein] + hexadecanoyl-CoA = S-hexadecanoyl-L-cysteinyl-[protein] + CoA. Functionally, palmitoyltransferase that catalyzes the addition of palmitate onto various protein substrates, such as CGAS, HRAS and LCK. This chain is Palmitoyltransferase ZDHHC18-A, found in Danio rerio (Zebrafish).